The primary structure comprises 165 residues: Putative glycine-rich cell wall structural protein 1 (165 aa).

The first 23 residues, 1 to 23 (MARKVIALAFLLLLTISLSKSNA), serve as a signal peptide directing secretion. R2; Tyr-rich repeat units lie at residues 56-62 (GYGYGYG) and 93-99 (GYGYGYG). A disordered region spans residues 105–125 (AQGQGSGGGGGGGGGGGGGGS). The stretch at 132–138 (GYGYGYG) is one R2; Tyr-rich repeat. The disordered stretch occupies residues 146–165 (GGGGGGGGGGGGSGYVGKHE).

The protein resides in the secreted. It is found in the cell wall. Its function is as follows. Responsible for plasticity of the cell wall. The protein is Putative glycine-rich cell wall structural protein 1 (GRP-1) of Oryza sativa subsp. indica (Rice).